Reading from the N-terminus, the 433-residue chain is MGQNFSKKSSNDLVSRIIFTIFMLIICRIGSFIPIPGIDSIALNSVAEKNQFGILGMFNMLSGGSLGRMSIFALAIMPYITASIIIQLMSVAYKPLENLKKEGESGKRKINQLSRYLTVLLASFQAYGVALSLESMVTNTGPVVILAGFFFRVTTVITLVVGTMLLMWLGEQITQRGIGNGTSLIIFIGIISGVPSAIISMFELSRKGALSPLIAITVCIGVVLLIAIIIFFEKAQRKLLVQYPKRQVGNKIYGGEATHMPLKLNTSGVIPPIFASSILLFPTTLANFSNSNSETMSMLSYYLGHGKPVYILLYVVLIMFFSFFYTAIVFNSEETANNLRKYGAYIPGKRPGKNTSDYFDYILTRLTVIGGLYLSIICVIPELLMNKYVISLSLGGTSFLIVVNVVLDTMTQIQTYLFSSKYEGLMKKIKLKN.

The next 10 membrane-spanning stretches (helical) occupy residues 17–37 (IIFT…PIPG), 71–91 (IFAL…LMSV), 117–137 (LTVL…ESMV), 141–161 (GPVV…TLVV), 184–204 (LIIF…MFEL), 212–232 (PLIA…IIFF), 268–288 (GVIP…LANF), 310–330 (YILL…AIVF), 366–386 (LTVI…LLMN), and 388–408 (YVIS…VVLD).

The protein belongs to the SecY/SEC61-alpha family. Component of the Sec protein translocase complex. Heterotrimer consisting of SecY, SecE and SecG subunits. The heterotrimers can form oligomers, although 1 heterotrimer is thought to be able to translocate proteins. Interacts with the ribosome. Interacts with SecDF, and other proteins may be involved. Interacts with SecA.

The protein localises to the cell inner membrane. In terms of biological role, the central subunit of the protein translocation channel SecYEG. Consists of two halves formed by TMs 1-5 and 6-10. These two domains form a lateral gate at the front which open onto the bilayer between TMs 2 and 7, and are clamped together by SecE at the back. The channel is closed by both a pore ring composed of hydrophobic SecY resides and a short helix (helix 2A) on the extracellular side of the membrane which forms a plug. The plug probably moves laterally to allow the channel to open. The ring and the pore may move independently. The protein is Protein translocase subunit SecY of Rickettsia typhi (strain ATCC VR-144 / Wilmington).